The sequence spans 335 residues: GTPase Obg (335 aa).

The Obg domain maps to 1-158; the sequence is MFVDQITLEL…RLVELELKLI (158 aa). Residues 159–334 enclose the OBG-type G domain; the sequence is ADIGLVGFPN…LYDLFKSKLS (176 aa). Residues 165–172, 190–194, 215–218, 285–288, and 315–317 contribute to the GTP site; these read GFPNAGKS, FTTLH, DIPG, NKID, and SGL. Positions 172 and 192 each coordinate Mg(2+).

This sequence belongs to the TRAFAC class OBG-HflX-like GTPase superfamily. OBG GTPase family. In terms of assembly, monomer. The cofactor is Mg(2+).

It is found in the cytoplasm. An essential GTPase which binds GTP, GDP and possibly (p)ppGpp with moderate affinity, with high nucleotide exchange rates and a fairly low GTP hydrolysis rate. Plays a role in control of the cell cycle, stress response, ribosome biogenesis and in those bacteria that undergo differentiation, in morphogenesis control. The polypeptide is GTPase Obg (Chlamydia trachomatis serovar L2 (strain ATCC VR-902B / DSM 19102 / 434/Bu)).